Here is a 476-residue protein sequence, read N- to C-terminus: Adenosylhomocysteinase (476 aa).

Residues T67, D142, and E202 each coordinate substrate. 203 to 205 contributes to the NAD(+) binding site; sequence TTT. Substrate contacts are provided by K232 and D236. NAD(+) is bound by residues N237, 266–271, E289, N324, 345–347, and N390; these read GYGDVG and IGH.

This sequence belongs to the adenosylhomocysteinase family. NAD(+) serves as cofactor.

The protein localises to the cytoplasm. The enzyme catalyses S-adenosyl-L-homocysteine + H2O = L-homocysteine + adenosine. Its pathway is amino-acid biosynthesis; L-homocysteine biosynthesis; L-homocysteine from S-adenosyl-L-homocysteine: step 1/1. Functionally, may play a key role in the regulation of the intracellular concentration of adenosylhomocysteine. In Prochlorococcus marinus (strain MIT 9313), this protein is Adenosylhomocysteinase.